The following is a 209-amino-acid chain: Holliday junction branch migration complex subunit RuvA (209 aa).

The tract at residues 1–70 (MFSYLKGEAI…EDGTYLYGFA (70 aa)) is domain I. A domain II region spans residues 71 to 149 (SAAARDLFRQ…QWRDQFSLPD (79 aa)). Residues 149 to 153 (DTAAQ) are flexible linker. Positions 154 to 209 (PNAAVHEDLELTLLALGYQETEIRGAIATLSQDSILLQNDNADEWIRRAITLLSQT) are domain III.

This sequence belongs to the RuvA family. In terms of assembly, homotetramer. Forms an RuvA(8)-RuvB(12)-Holliday junction (HJ) complex. HJ DNA is sandwiched between 2 RuvA tetramers; dsDNA enters through RuvA and exits via RuvB. An RuvB hexamer assembles on each DNA strand where it exits the tetramer. Each RuvB hexamer is contacted by two RuvA subunits (via domain III) on 2 adjacent RuvB subunits; this complex drives branch migration. In the full resolvosome a probable DNA-RuvA(4)-RuvB(12)-RuvC(2) complex forms which resolves the HJ.

The protein localises to the cytoplasm. The RuvA-RuvB-RuvC complex processes Holliday junction (HJ) DNA during genetic recombination and DNA repair, while the RuvA-RuvB complex plays an important role in the rescue of blocked DNA replication forks via replication fork reversal (RFR). RuvA specifically binds to HJ cruciform DNA, conferring on it an open structure. The RuvB hexamer acts as an ATP-dependent pump, pulling dsDNA into and through the RuvAB complex. HJ branch migration allows RuvC to scan DNA until it finds its consensus sequence, where it cleaves and resolves the cruciform DNA. This Picosynechococcus sp. (strain ATCC 27264 / PCC 7002 / PR-6) (Agmenellum quadruplicatum) protein is Holliday junction branch migration complex subunit RuvA.